A 293-amino-acid chain; its full sequence is MDQVVYHTDFPGLNLLKRGKVRDVYDFGDRLLIVATDRLSAFDVVMPDPIPGKGEILTQISLFWFDQVKDIVRNHLISSDVNDYPEACRPYAETLAGRSMLVTKTEPLAIECVVRGYLSGSGWKSYQKDRTVCGISLPDGLRESDRLPEPIFTPSTKAEAGQHDINISFDEAANIAGRETTEKARDLSLAIYRRGVEVADARGIIIADTKFEFGFVDGELILIDEVLTPDSSRFWPRDGYAPGGPQQSFDKQYVRDYLLSLNWNQKPPAPDLPPDVVANTRKKYSEALDLLVG.

The protein belongs to the SAICAR synthetase family.

The enzyme catalyses 5-amino-1-(5-phospho-D-ribosyl)imidazole-4-carboxylate + L-aspartate + ATP = (2S)-2-[5-amino-1-(5-phospho-beta-D-ribosyl)imidazole-4-carboxamido]succinate + ADP + phosphate + 2 H(+). The protein operates within purine metabolism; IMP biosynthesis via de novo pathway; 5-amino-1-(5-phospho-D-ribosyl)imidazole-4-carboxamide from 5-amino-1-(5-phospho-D-ribosyl)imidazole-4-carboxylate: step 1/2. This Desulfosudis oleivorans (strain DSM 6200 / JCM 39069 / Hxd3) (Desulfococcus oleovorans) protein is Phosphoribosylaminoimidazole-succinocarboxamide synthase.